Reading from the N-terminus, the 484-residue chain is MKFIVKLFPEIMMKSKPVRMRFTKMLETNIRNVLKKVDESAKVQRQWDKIMVMVPDDRPDLVEAFGERLACIPGIAHVLQVNVSTFTSVDDIYQQTLVAYKEQLVGKTFCVRVKRAGKHDFNSIEVERYVGGGLNQFTEAAGVRLKNPDMTVHLEIDNDNLYLIDKRIEGLGGFPMATQEDVLSLISGGFDSGVSSYQFIKRGSRTHYCFFNLGGDQHEIGVKQVAYHLWQKYGESHKVKFISVPFDPVVQEILERIDNGQMGVILKRMMMRAATRVAQKMGIQALVTGEAMGQVSSQTLTNLNVIDRCTEQLILRPLIAMDKQDIINLSRQIGTEDFAKSIPEYCGVISQKPTVKAVLSKVEAEEAKFSEDLLDRVIADAEIIDIREIATQMDTKITETETVDSINANEIIIDVRAPEEEEKSPLKIDGVEVKAIPFYKLATQFADLDKDKSYLLYCDRGVMSKLQALYLQEQGYTNVKVYRP.

Residues 63-167 (EAFGERLACI…NDNLYLIDKR (105 aa)) enclose the THUMP domain. ATP-binding positions include 185-186 (LI), Lys-267, Gly-289, and Gln-298. An intrachain disulfide couples Cys-346 to Cys-458. The Rhodanese domain maps to 406–484 (INANEIIIDV…GYTNVKVYRP (79 aa)). The active-site Cysteine persulfide intermediate is the Cys-458.

This sequence belongs to the ThiI family.

The protein resides in the cytoplasm. The catalysed reaction is [ThiI sulfur-carrier protein]-S-sulfanyl-L-cysteine + a uridine in tRNA + 2 reduced [2Fe-2S]-[ferredoxin] + ATP + H(+) = [ThiI sulfur-carrier protein]-L-cysteine + a 4-thiouridine in tRNA + 2 oxidized [2Fe-2S]-[ferredoxin] + AMP + diphosphate. The enzyme catalyses [ThiS sulfur-carrier protein]-C-terminal Gly-Gly-AMP + S-sulfanyl-L-cysteinyl-[cysteine desulfurase] + AH2 = [ThiS sulfur-carrier protein]-C-terminal-Gly-aminoethanethioate + L-cysteinyl-[cysteine desulfurase] + A + AMP + 2 H(+). The protein operates within cofactor biosynthesis; thiamine diphosphate biosynthesis. Its function is as follows. Catalyzes the ATP-dependent transfer of a sulfur to tRNA to produce 4-thiouridine in position 8 of tRNAs, which functions as a near-UV photosensor. Also catalyzes the transfer of sulfur to the sulfur carrier protein ThiS, forming ThiS-thiocarboxylate. This is a step in the synthesis of thiazole, in the thiamine biosynthesis pathway. The sulfur is donated as persulfide by IscS. The protein is tRNA sulfurtransferase of Shewanella halifaxensis (strain HAW-EB4).